Consider the following 962-residue polypeptide: MASNSTKSFLADAGYGEQELDANSALMELDKGLRSGKLGEQCEAVVRFPRLFQKYPFPILINSAFLKLADVFRVGNNFLRLCVLKVTQQSEKHLEKILNVDEFVKRIFSVIHSNDPVARAITLRMLGSLASIIPERKNAHHSIRQSLDSHDNVEVEAAVFAAANFSAQSKDFAVGICNKISEMIQGLATPVDLKLKLIPILQHMHHDAILASSARQLLQQLVTAYPSTRMVIVSLHTFTLLAASSLVDTPKQIQLLLQYLKNDPRKAVKRLAIQDLKLLANKTPHTWSRENIQALCECALQTPYDSLKLGMLSVLATLSGTIAVKHYFSIASGNVGSSPRSSDLVKLAQECCYHNNRGIAAHGVRVLTNITVSCQEKDLLALEQDAVFGLESLLVLCSQDDSPGAQATLKIALNCMVKLAKGRPHLSQSVVETLLTQLHSAQDTARILMCHCLAAIAMQLPVLGDGMLGDLVELYKVIGRSATDKQQELLVSLATVIFVASQKALSAEVKAVIKQQLESVSNGWTVYRIARQASRMGNHDMARELYQTLLTQVASEHFYFWLNSLKEFSHAEQCLTGLQEENYSSALSCIAESLKFYHKGIASLTAASTPLNPLSFQCEFVKLRIDLLQAFSQLICTCNSLKTSPPPAIATTIAMTLGNDLQRCGRISNQMKLSMEEFRSLASRYGDLYQASFDADSATLRNVELQQQSCLLISHAIEALILDPESASFQEYGSTGAAHADSEYERRMMSVYNHVLEEVESLNRKYTPVSYMHTACLCNAIISLLKVPLSFQRYFFQKLQSTSIKLALSPSPRNPAEPIAVQNNQQLALKVEGVVQHGSKPGLFRRIQSVCLNVSSTLQSKSGQDYKIPIDNMTNEMEQRVEPHNDYFSTQFLLNFAILGTHNITVESSVKDANGIVWKTGPRTTIFVKSLEDPYSQQIRLQQQQAQQPLQQQQQRNAYTRF.

Ser338 and Ser809 each carry phosphoserine.

Belongs to the Integrator subunit 7 family. Component of the Integrator complex, composed of core subunits INTS1, INTS2, INTS3, INTS4, INTS5, INTS6, INTS7, INTS8, INTS9/RC74, INTS10, INTS11/CPSF3L, INTS12, INTS13, INTS14 and INTS15. The core complex associates with protein phosphatase 2A subunits PPP2CA and PPP2R1A, to form the Integrator-PP2A (INTAC) complex. Interacts with NABP2.

It is found in the nucleus. The protein localises to the chromosome. The protein resides in the cytoplasm. Functionally, component of the integrator complex, a multiprotein complex that terminates RNA polymerase II (Pol II) transcription in the promoter-proximal region of genes. The integrator complex provides a quality checkpoint during transcription elongation by driving premature transcription termination of transcripts that are unfavorably configured for transcriptional elongation: the complex terminates transcription by (1) catalyzing dephosphorylation of the C-terminal domain (CTD) of Pol II subunit POLR2A/RPB1 and SUPT5H/SPT5, (2) degrading the exiting nascent RNA transcript via endonuclease activity and (3) promoting the release of Pol II from bound DNA. The integrator complex is also involved in terminating the synthesis of non-coding Pol II transcripts, such as enhancer RNAs (eRNAs), small nuclear RNAs (snRNAs), telomerase RNAs and long non-coding RNAs (lncRNAs). May be not involved in the recruitment of cytoplasmic dynein to the nuclear envelope by different components of the INT complex. Plays a role in DNA damage response (DDR) signaling during the S phase. The chain is Integrator complex subunit 7 (INTS7) from Bos taurus (Bovine).